The sequence spans 241 residues: Probable 2-phosphosulfolactate phosphatase (241 aa).

This sequence belongs to the ComB family. Mg(2+) serves as cofactor.

It carries out the reaction (2R)-O-phospho-3-sulfolactate + H2O = (2R)-3-sulfolactate + phosphate. This is Probable 2-phosphosulfolactate phosphatase from Microcystis aeruginosa (strain NIES-843 / IAM M-2473).